Reading from the N-terminus, the 623-residue chain is Protein EDS1L (623 aa).

A2 carries the post-translational modification N-acetylalanine. S123 acts as the Nucleophile in catalysis. Active-site charge relay system residues include D187 and H317.

In terms of assembly, homodimer. Interacts with RPS4, RPS6, SNC1, SRFR1, AvrRps4 and HopA1. Interacts with PAD4 (via N-terminus). Interacts with SAG101. EDS1-SAG101 and EDS1-PAD4 form separate complexes in pathogen-unchallenged cells.

Its subcellular location is the nucleus. It is found in the cytoplasm. The protein localises to the microsome. Its function is as follows. Positive regulator of basal resistance and of effector-triggered immunity specifically mediated by TIR-NB-LRR resistance proteins. Disruption by bacterial effector of EDS1-TIR-NB-LRR resistance protein interactions constitutes the first step in resistance activation. Triggers early plant defenses and hypersensitive response independently of PAD4, and then recruits PAD4 to potentiate plant defenses through the accumulation of salicylic acid. Nuclear localization is essential for basal and TIR-NB-LRR-conditioned immunity and for reprogramming defense gene expression, while cytoplasmic EDS1 is required to induce a complete immune response. Heterodimerization with PAD4 or SGA101 is necessary for TNL-mediated effector-triggered immunity. Contributes to nonhost resistance against E.amylovora. Has no direct lipase activity. In Arabidopsis thaliana (Mouse-ear cress), this protein is Protein EDS1L.